The primary structure comprises 353 residues: Pleckstrin-2 (353 aa).

N-acetylmethionine is present on Met-1. Residues 4-104 (GVLKEGFLVK…WAFEITGAIH (101 aa)) form the PH 1 domain. At Ser-120 the chain carries Phosphoserine. Residues 139-225 (TSTGIRPSPN…DSTALYTFAE (87 aa)) form the DEP domain. The PH 2 domain maps to 247 to 353 (TVVKQGYLSK…EWIEAIKKLT (107 aa)).

Ubiquitous. Most abundant in the thymus, large bowel, small bowel, stomach, and prostate.

It is found in the cell projection. The protein resides in the lamellipodium membrane. It localises to the cytoplasm. Its subcellular location is the cytoskeleton. Its function is as follows. May help orchestrate cytoskeletal arrangement. Contribute to lamellipodia formation. Overexpression of pleckstrin 2 causes large lamellipodia and peripheral ruffle formation. In Mus musculus (Mouse), this protein is Pleckstrin-2 (Plek2).